The primary structure comprises 402 residues: Advanced glycosylation end product-specific receptor (402 aa).

Residues 1-22 form the signal peptide; sequence MPTGTVARAWVLVLALWGAVAG. One can recognise an Ig-like V-type domain in the interval 23-109; sequence GQNITARIGE…ATNRLGKEVK (87 aa). Residues 23-341 lie on the Extracellular side of the membrane; sequence GQNITARIGE…DGSGLGTLAL (319 aa). N-linked (GlcNAc...) asparagine glycans are attached at residues Asn-25 and Asn-80. 2 disulfide bridges follow: Cys-38–Cys-98 and Cys-143–Cys-206. Ig-like C2-type domains are found at residues 123-219 and 233-315; these read PEIV…RPLN and PEGI…PPVN. Residues 342-362 traverse the membrane as a helical segment; the sequence is ALGILGGLGIAALLIGAILWR. Residues 363-402 lie on the Cytoplasmic side of the membrane; sequence KRQPRLEERKAPESQEDEEERAELNQSEEAEMPENGAGGP. Residues 368 to 402 form a disordered region; it reads LEERKAPESQEDEEERAELNQSEEAEMPENGAGGP. 2 positions are modified to phosphoserine: Ser-376 and Ser-389. Positions 376 to 394 are enriched in acidic residues; sequence SQEDEEERAELNQSEEAEM.

Constitutive homodimer; disulfide-linked. Forms homooligomers. Interacts with S100A1 and APP. Interacts with S100B, S100A12 and S100A14. Interacts with TIRAP. Interacts with HMGB1. Interacts with LGP2; this interaction plays an important role in AGER-mediated pro-inflammatory responses and cytokine release. Interacts with double-strand break repair protein MRE11 which is a core component of the MRN complex; the interaction enhances MRE11 endonuclease activity and promotes DNA repair. Interacts with the MCM2-7 complex via interaction with complex member MCM2; the interaction is increased following DNA replication stress and stabilizes the MCM2-7 complex at replication forks. Post-translationally, phosphorylated on its cytoplasmic domain by PKCzeta/PRKCZ upon ligand binding. Phosphorylated by ATM following DNA damage. Targeted by the ubiquitin E3 ligase subunit FBXO10 to mediate its ubiquitination and degradation. Endothelial cells and cardiomyocytes. Expressed in brain.

The protein localises to the cell membrane. Its subcellular location is the cell projection. It localises to the phagocytic cup. The protein resides in the early endosome. It is found in the nucleus. Functionally, cell surface pattern recognition receptor that senses endogenous stress signals with a broad ligand repertoire including advanced glycation end products, S100 proteins, high-mobility group box 1 protein/HMGB1, amyloid beta/APP oligomers, nucleic acids, histones, phospholipids and glycosaminoglycans. Advanced glycosylation end products are nonenzymatically glycosylated proteins which accumulate in vascular tissue in aging and at an accelerated rate in diabetes. These ligands accumulate at inflammatory sites during the pathogenesis of various diseases including diabetes, vascular complications, neurodegenerative disorders and cancers, and RAGE transduces their binding into pro-inflammatory responses. Upon ligand binding, uses TIRAP and MYD88 as adapters to transduce the signal ultimately leading to the induction of inflammatory cytokines IL6, IL8 and TNFalpha through activation of NF-kappa-B. Interaction with S100A12 on endothelium, mononuclear phagocytes, and lymphocytes triggers cellular activation, with generation of key pro-inflammatory mediators. Interaction with S100B after myocardial infarction may play a role in myocyte apoptosis by activating ERK1/2 and p53/TP53 signaling. Contributes to the translocation of amyloid-beta peptide (ABPP) across the cell membrane from the extracellular to the intracellular space in cortical neurons. ABPP-initiated RAGE signaling, especially stimulation of p38 mitogen-activated protein kinase (MAPK), has the capacity to drive a transport system delivering ABPP as a complex with RAGE to the intraneuronal space. Participates in endothelial albumin transcytosis together with HMGB1 through the RAGE/SRC/Caveolin-1 pathway, leading to endothelial hyperpermeability. Mediates the loading of HMGB1 in extracellular vesicles (EVs) that shuttle HMGB1 to hepatocytes by transferrin-mediated endocytosis and subsequently promote hepatocyte pyroptosis by activating the NLRP3 inflammasome. Binds to DNA and promotes extracellular hypomethylated DNA (CpG DNA) uptake by cells via the endosomal route to activate inflammatory responses. Mediates phagocytosis by non-professional phagocytes (NPP) and this is enhanced by binding to ligands including RNA, DNA, HMGB1 and histones. Promotes NPP-mediated phagocytosis of Saccharomyces cerevisiae spores by binding to RNA attached to the spore wall. Also promotes NPP-mediated phagocytosis of apoptotic cells. Following DNA damage, recruited to DNA double-strand break sites where it colocalizes with the MRN repair complex via interaction with double-strand break repair protein MRE11. Enhances the endonuclease activity of MRE11, promoting the end resection of damaged DNA. Promotes DNA damage repair in trophoblasts which enhances trophoblast invasion and contributes to placental development and maintenance. Protects cells from DNA replication stress by localizing to damaged replication forks where it stabilizes the MCM2-7 complex and promotes faithful progression of the replication fork. The polypeptide is Advanced glycosylation end product-specific receptor (Ager) (Rattus norvegicus (Rat)).